The following is a 150-amino-acid chain: UPF0208 membrane protein VIBHAR_02941 (150 aa).

A run of 2 helical transmembrane segments spans residues 42–62 (FGIKVMPAVAAISVLTQMAFN) and 70–90 (AIVVALFAISMPLQGMWWLGS).

It belongs to the UPF0208 family.

It is found in the cell inner membrane. This is UPF0208 membrane protein VIBHAR_02941 from Vibrio campbellii (strain ATCC BAA-1116).